The sequence spans 341 residues: Anthranilate phosphoribosyltransferase (341 aa).

Residues G79, 82–83 (GD), T87, 89–92 (NIST), 107–115 (KHGNRSISS), and S119 each bind 5-phospho-alpha-D-ribose 1-diphosphate. Position 79 (G79) interacts with anthranilate. A Mg(2+)-binding site is contributed by S91. An anthranilate-binding site is contributed by N110. R164 is a binding site for anthranilate. Mg(2+)-binding residues include D222 and E223.

The protein belongs to the anthranilate phosphoribosyltransferase family. In terms of assembly, homodimer. Mg(2+) is required as a cofactor.

It catalyses the reaction N-(5-phospho-beta-D-ribosyl)anthranilate + diphosphate = 5-phospho-alpha-D-ribose 1-diphosphate + anthranilate. It participates in amino-acid biosynthesis; L-tryptophan biosynthesis; L-tryptophan from chorismate: step 2/5. Its function is as follows. Catalyzes the transfer of the phosphoribosyl group of 5-phosphorylribose-1-pyrophosphate (PRPP) to anthranilate to yield N-(5'-phosphoribosyl)-anthranilate (PRA). The sequence is that of Anthranilate phosphoribosyltransferase from Blochmanniella pennsylvanica (strain BPEN).